A 33-amino-acid polypeptide reads, in one-letter code: MNSELLIQLGSLTLITLTGPLIIGIIFIRKGNL.

The chain crosses the membrane as a helical span at residues 7-27 (IQLGSLTLITLTGPLIIGIIF).

The protein belongs to the Psb30/Ycf12 family. In terms of assembly, PSII is composed of 1 copy each of membrane proteins PsbA, PsbB, PsbC, PsbD, PsbE, PsbF, PsbH, PsbI, PsbJ, PsbK, PsbL, PsbM, PsbT, PsbY, PsbZ, Psb30/Ycf12, peripheral proteins of the oxygen-evolving complex and a large number of cofactors. It forms dimeric complexes.

It is found in the plastid. It localises to the chloroplast thylakoid membrane. In terms of biological role, a core subunit of photosystem II (PSII), probably helps stabilize the reaction center. In Euglena gracilis, this protein is Photosystem II reaction center protein Psb30.